The following is a 214-amino-acid chain: 3,4-dihydroxy-2-butanone 4-phosphate synthase (214 aa).

D-ribulose 5-phosphate contacts are provided by residues Arg-37–Glu-38, Asp-42, Arg-150–Thr-154, and Glu-174. Glu-38 is a binding site for Mg(2+). Position 153 (His-153) interacts with Mg(2+).

This sequence belongs to the DHBP synthase family. As to quaternary structure, homodimer. Requires Mg(2+) as cofactor. Mn(2+) is required as a cofactor.

The enzyme catalyses D-ribulose 5-phosphate = (2S)-2-hydroxy-3-oxobutyl phosphate + formate + H(+). It participates in cofactor biosynthesis; riboflavin biosynthesis; 2-hydroxy-3-oxobutyl phosphate from D-ribulose 5-phosphate: step 1/1. In terms of biological role, catalyzes the conversion of D-ribulose 5-phosphate to formate and 3,4-dihydroxy-2-butanone 4-phosphate. In Nitratidesulfovibrio vulgaris (strain DP4) (Desulfovibrio vulgaris), this protein is 3,4-dihydroxy-2-butanone 4-phosphate synthase.